A 396-amino-acid chain; its full sequence is MAKGKFERTKPHVNVGTIGHVDHGKTTLTAAIATVLSKKFGGEAKGYDQIDNAPEEKARGITINTSHVEYETESRHYAHVDCPGHADYVKNMITGAAQMDGAILVCSAADGPMPQTREHILLSRQVGVPYIIVFLNKADMVDDAELLELVEMEVRELLSKYEFPGDDLPIVKGSAKLALEGDTGPLGEQAILALANALDTYIPTPERAVDGAFLLPVEDVFSISGRGTVVTGRIERGIIKVGEEIEIVGIRDTQKTTCTGVEMFRKLLDQGQAGDNVGVLLRGTKREDVERGQVLAKPGSIKPHKHFTGEIYVLSKDEGGRHTPFFNNYRPQFYFRTTDVTGSIELPKDKEMVMPGDNVSITVMLINPIAMEEGLRFAIREGGRTVGAGVVAKIIE.

Residues 10 to 206 enclose the tr-type G domain; that stretch reads KPHVNVGTIG…ALDTYIPTPE (197 aa). Positions 19–26 are G1; the sequence is GHVDHGKT. 19–26 serves as a coordination point for GTP; the sequence is GHVDHGKT. Thr26 is a Mg(2+) binding site. The segment at 60-64 is G2; that stretch reads GITIN. The interval 81 to 84 is G3; it reads DCPG. GTP-binding positions include 81-85 and 136-139; these read DCPGH and NKAD. The G4 stretch occupies residues 136-139; sequence NKAD. Residues 174–176 are G5; it reads SAK.

It belongs to the TRAFAC class translation factor GTPase superfamily. Classic translation factor GTPase family. EF-Tu/EF-1A subfamily. In terms of assembly, monomer.

The protein localises to the cytoplasm. The enzyme catalyses GTP + H2O = GDP + phosphate + H(+). In terms of biological role, GTP hydrolase that promotes the GTP-dependent binding of aminoacyl-tRNA to the A-site of ribosomes during protein biosynthesis. This chain is Elongation factor Tu, found in Janthinobacterium sp. (strain Marseille) (Minibacterium massiliensis).